A 178-amino-acid chain; its full sequence is GTP-dependent dephospho-CoA kinase (178 aa).

GTP contacts are provided by Asp-55, Val-57, Asp-74, Lys-76, and Glu-127.

Belongs to the GTP-dependent DPCK family.

The enzyme catalyses 3'-dephospho-CoA + GTP = GDP + CoA + H(+). The protein operates within cofactor biosynthesis; coenzyme A biosynthesis. Catalyzes the GTP-dependent phosphorylation of the 3'-hydroxyl group of dephosphocoenzyme A to form coenzyme A (CoA). In Saccharolobus islandicus (strain Y.G.57.14 / Yellowstone #1) (Sulfolobus islandicus), this protein is GTP-dependent dephospho-CoA kinase.